The chain runs to 322 residues: Acetyl-coenzyme A carboxylase carboxyl transferase subunit alpha (322 aa).

In terms of domain architecture, CoA carboxyltransferase C-terminal spans 40–297 (PLQKKLGDLR…RETLTRNLEE (258 aa)).

This sequence belongs to the AccA family. In terms of assembly, acetyl-CoA carboxylase is a heterohexamer composed of biotin carboxyl carrier protein (AccB), biotin carboxylase (AccC) and two subunits each of ACCase subunit alpha (AccA) and ACCase subunit beta (AccD).

It localises to the cytoplasm. The enzyme catalyses N(6)-carboxybiotinyl-L-lysyl-[protein] + acetyl-CoA = N(6)-biotinyl-L-lysyl-[protein] + malonyl-CoA. It participates in lipid metabolism; malonyl-CoA biosynthesis; malonyl-CoA from acetyl-CoA: step 1/1. Functionally, component of the acetyl coenzyme A carboxylase (ACC) complex. First, biotin carboxylase catalyzes the carboxylation of biotin on its carrier protein (BCCP) and then the CO(2) group is transferred by the carboxyltransferase to acetyl-CoA to form malonyl-CoA. The protein is Acetyl-coenzyme A carboxylase carboxyl transferase subunit alpha of Gemmatimonas aurantiaca (strain DSM 14586 / JCM 11422 / NBRC 100505 / T-27).